A 177-amino-acid polypeptide reads, in one-letter code: SAYSvFN domain-containing protein 1 (177 aa).

Residues 1 to 100 are Cytoplasmic-facing; sequence MADFQEQLRQ…CLKYTLWTVY (100 aa). Over residues 57-70 the composition is skewed to polar residues; it reads SENSQDEAVTSSES. The disordered stretch occupies residues 57–85; that stretch reads SENSQDEAVTSSESELVPEEQPTRSTDHH. The segment at residues 101 to 121 is an intramembrane region (helical); sequence LLFWITLYVIAIKLSFGLVFL. At 122-177 the chain is on the cytoplasmic side; sequence MFSALFGIYFNTRTEPKKRNEMSAYSVFNKNCESIDGTLKAEQFEREIRYGSGSVR.

The protein belongs to the SAYSD1 family.

The protein localises to the endoplasmic reticulum membrane. In terms of biological role, ufmylation 'reader' component of a translocation-associated quality control pathway, a mechanism that takes place when a ribosome has stalled during translation, and which is required to degrade clogged substrates. Specifically recognizes and binds ufmylated ribosomes when a ribosome has stalled, promoting the transport of stalled nascent chain to lysosomes for degradation. The chain is SAYSvFN domain-containing protein 1 from Drosophila melanogaster (Fruit fly).